Here is a 156-residue protein sequence, read N- to C-terminus: MKLHILAVGHKMPDWIATGFDEYAKRMPPELRIELREIKPEQRSSGRSAESVMASERQKIEAALPRNARIVALDERGKDWTTMQLANALPTWQQDGRDVAFLIGGADGLDPDLKARADMLLRVSSLTLPHAMVRVLLAEQLYRAWTITQNHPYHRV.

Residues L73, G104, and V123–L128 each bind S-adenosyl-L-methionine.

The protein belongs to the RNA methyltransferase RlmH family. As to quaternary structure, homodimer.

Its subcellular location is the cytoplasm. The catalysed reaction is pseudouridine(1915) in 23S rRNA + S-adenosyl-L-methionine = N(3)-methylpseudouridine(1915) in 23S rRNA + S-adenosyl-L-homocysteine + H(+). In terms of biological role, specifically methylates the pseudouridine at position 1915 (m3Psi1915) in 23S rRNA. The polypeptide is Ribosomal RNA large subunit methyltransferase H (Paraburkholderia phymatum (strain DSM 17167 / CIP 108236 / LMG 21445 / STM815) (Burkholderia phymatum)).